A 111-amino-acid chain; its full sequence is UPF0145 protein BMA10229_A0446 (111 aa).

The protein belongs to the UPF0145 family.

This Burkholderia mallei (strain NCTC 10229) protein is UPF0145 protein BMA10229_A0446.